The primary structure comprises 652 residues: Phosphatidylinositol-binding clathrin assembly protein (652 aa).

Ser2 carries the post-translational modification N-acetylserine. The ENTH domain maps to 14 to 145 (QHSVTGSAVS…VSYRQVAFDF (132 aa)). Phosphoserine occurs at positions 16 and 20. An interaction with PIMREG region spans residues 221–294 (KYFDMKKNQC…LEGKKIKDST (74 aa)). A Glycyl lysine isopeptide (Lys-Gly) (interchain with G-Cter in SUMO2) cross-link involves residue Lys238. A phosphoserine mark is found at Ser303 and Ser315. The tract at residues 559-580 (KNDVNWSQPGEKKLTGGSNWQP) is disordered.

Belongs to the PICALM/SNAP91 family. As to quaternary structure, binds to clathrin; involves primarily the C-terminal sequences, but the full-length protein is required for full binding capacity. Binds phosphatidylinositol 4,5- bisphosphate. Interacts with PIMREG; this interaction may change the subcellular location into the nucleus. Interacts with AP2A1 (via its alpha-appendage domain). Interacts (via N-terminus) with VAMP2; VAMP3; VAMP7 and VAMP8 (Via N-terminus). Interacts with LC3/MAP1LC3A. In terms of tissue distribution, expressed in all tissues examined.

It is found in the cell membrane. The protein localises to the membrane. The protein resides in the clathrin-coated pit. Its subcellular location is the golgi apparatus. It localises to the cytoplasmic vesicle. It is found in the clathrin-coated vesicle. The protein localises to the nucleus. Its function is as follows. Cytoplasmic adapter protein that plays a critical role in clathrin-mediated endocytosis which is important in processes such as internalization of cell receptors, synaptic transmission or removal of apoptotic cells. Recruits AP-2 and attaches clathrin triskelions to the cytoplasmic side of plasma membrane leading to clathrin-coated vesicles (CCVs) assembly. Furthermore, regulates clathrin-coated vesicle size and maturation by directly sensing and driving membrane curvature. In addition to binding to clathrin, mediates the endocytosis of small R-SNARES (Soluble NSF Attachment Protein REceptors) between plasma membranes and endosomes including VAMP2, VAMP3, VAMP4, VAMP7 or VAMP8. In turn, PICALM-dependent SNARE endocytosis is required for the formation and maturation of autophagic precursors. Modulates thereby autophagy and the turnover of autophagy substrates such as MAPT/TAU or amyloid precursor protein cleaved C-terminal fragment (APP-CTF). This chain is Phosphatidylinositol-binding clathrin assembly protein (PICALM), found in Homo sapiens (Human).